Here is a 317-residue protein sequence, read N- to C-terminus: Type II restriction enzyme NaeI (317 aa).

In terms of assembly, homodimer.

It carries out the reaction Endonucleolytic cleavage of DNA to give specific double-stranded fragments with terminal 5'-phosphates.. Functionally, an E and P subtype restriction enzyme that recognizes the double-stranded unmethylated sequence 5'-GCCGGC-3' and cleaves after C-3. The chain is Type II restriction enzyme NaeI from Lentzea aerocolonigenes (Lechevalieria aerocolonigenes).